A 414-amino-acid chain; its full sequence is Chaperone protein dnaJ 39 (414 aa).

The span at 1 to 24 (MATHSSRSENKDAGEEDELRRRNP) shows a compositional bias: basic and acidic residues. A disordered region spans residues 1 to 36 (MATHSSRSENKDAGEEDELRRRNPYEVLGIPSNSTD). A J domain is found at 23-88 (NPYEVLGIPS…ENRRLYDTTG (66 aa)). Residues 296-324 (EKESLRSTEAQIVSKRTELLKFEAEYHEV) adopt a coiled-coil conformation. The segment at 362-395 (TKQGSSKSRSWSKKKSSLLMEPREEGEVAVREEG) is disordered. Positions 382–395 (EPREEGEVAVREEG) are enriched in basic and acidic residues.

Belongs to the DnaJ family. C/III subfamily. In terms of tissue distribution, expressed constitutively at low levels in seedlings, roots, leaves, stems, flowers and siliques.

It localises to the membrane. Its function is as follows. Plays a continuous role in plant development probably in the structural organization of compartments. Seems to be involved in early gravitropic signal transduction within the gravity-perceiving cells (statocytes). The polypeptide is Chaperone protein dnaJ 39 (ATJ39) (Arabidopsis thaliana (Mouse-ear cress)).